We begin with the raw amino-acid sequence, 189 residues long: Haloacid dehalogenase-like hydrolase domain-containing protein 3 (189 aa).

Belongs to the HAD-like hydrolase superfamily.

This Xenopus tropicalis (Western clawed frog) protein is Haloacid dehalogenase-like hydrolase domain-containing protein 3 (hdhd3).